A 443-amino-acid chain; its full sequence is Phosphatidate cytidylyltransferase 2 (443 aa).

The span at 1 to 38 shows a compositional bias: basic and acidic residues; that stretch reads MTELRQRAVREDAPPEDKESESEAKLDGETASDSESRA. The interval 1–51 is disordered; sequence MTELRQRAVREDAPPEDKESESEAKLDGETASDSESRAETAPPPTSIDDTP. Ser-20 bears the Phosphoserine mark. The residue at position 30 (Thr-30) is a Phosphothreonine. Residues Ser-32, Ser-34, and Ser-36 each carry the phosphoserine modification. Residue Thr-50 is modified to Phosphothreonine. Helical transmembrane passes span 78 to 98, 129 to 149, 165 to 185, 212 to 232, 261 to 281, and 338 to 358; these read MIAF…MIVM, WYFL…DYFF, HRFI…LSLV, LVIH…SCVI, GFIG…YVMS, and SALS…ASGF.

It belongs to the CDS family. Homodimer.

It is found in the endoplasmic reticulum membrane. It carries out the reaction a 1,2-diacyl-sn-glycero-3-phosphate + CTP + H(+) = a CDP-1,2-diacyl-sn-glycerol + diphosphate. The catalysed reaction is 1-octadecanoyl-2-(5Z,8Z,11Z,14Z-eicosatetraenoyl)-sn-glycero-3-phosphate + CTP + H(+) = 1-octadecanoyl-2-(5Z,8Z,11Z,14Z-eicosatetraenoyl)-sn-glycero-3-cytidine-5'-diphosphate + diphosphate. The enzyme catalyses 1-octadecanoyl-2-(9Z,12Z-octadecadienoyl)-sn-glycero-3-phosphate + CTP + H(+) = 1-octadecanoyl-2-(9Z,12Z-octadecadienoyl)-sn-glycero-3-cytidine-5'-diphosphate + diphosphate. It catalyses the reaction 1-hexadecanoyl-2-(5Z,8Z,11Z,14Z-eicosatetraenoyl)-sn-glycero-3-phosphate + CTP + H(+) = 1-hexadecanoyl-2-(5Z,8Z,11Z,14Z-eicosatetraenoyl)-sn-glycero-3-cytidine-5'-diphosphate + diphosphate. It carries out the reaction 1,2-di-(5Z,8Z,11Z,14Z)-eicosatetraenoyl-sn-glycero-3-phosphate + CTP + H(+) = 1,2-di-(5Z,8Z,11Z,14Z-eicosatetraenoyl)-sn-glycero-3-cytidine-5'-diphosphate + diphosphate. The catalysed reaction is 1-octadecanoyl-2-(9Z-octadecenoyl)-sn-glycero-3-phosphate + CTP + H(+) = 1-octadecanoyl-2-(9Z-octadecenoyl)-sn-glycero-3-cytidine-5'-diphosphate + diphosphate. The enzyme catalyses 1-octadecanoyl-2-(4Z,7Z,10Z,13Z,16Z,19Z-docosahexaenoyl)-sn-glycero-3-phosphate + CTP + H(+) = 1-octadecanoyl-2-(4Z,7Z,10Z,13Z,16Z,19Z-docosahexaenoyl)-sn-glycero-3-cytidine-5'-diphosphate + diphosphate. It catalyses the reaction 1,2-di-(9Z,12Z-octadecadienoyl)-sn-glycero-3-phosphate + CTP + H(+) = 1,2-di-(9Z,12Z-octadecadienoyl)-sn-glycero-3-cytidine-5'-diphosphate + diphosphate. It carries out the reaction 1,2-di-(9Z-octadecenoyl)-sn-glycero-3-phosphate + CTP + H(+) = 1,2-di-(9Z-octadecenoyl)-sn-glycero-3-cytidine-5'-diphosphate + diphosphate. It functions in the pathway phospholipid metabolism; CDP-diacylglycerol biosynthesis; CDP-diacylglycerol from sn-glycerol 3-phosphate: step 3/3. Functionally, catalyzes the conversion of phosphatidic acid (PA) to CDP-diacylglycerol (CDP-DAG), an essential intermediate in the synthesis of phosphatidylglycerol, cardiolipin and phosphatidylinositol. Exhibits specificity for the nature of the acyl chains at the sn-1 and sn-2 positions in the substrate, PA and the preferred acyl chain composition is 1-stearoyl-2-arachidonoyl-sn-phosphatidic acid. Plays an important role in regulating the growth and maturation of lipid droplets which are storage organelles at the center of lipid and energy homeostasis. The protein is Phosphatidate cytidylyltransferase 2 of Rattus norvegicus (Rat).